The primary structure comprises 322 residues: Olfactory receptor 11L1 (322 aa).

The Extracellular portion of the chain corresponds to 1 to 25 (MEPQNTSTVTNFQLLGFQNLLEWQA). A glycan (N-linked (GlcNAc...) asparagine) is linked at asparagine 5. The chain crosses the membrane as a helical span at residues 26–46 (LLFVIFLLIYCLTIIGNVVII). Over 47–54 (TVVSQGLR) the chain is Cytoplasmic. The chain crosses the membrane as a helical span at residues 55-75 (LHSPMYMFLQHLSFLEVWYTS). Residues 76–99 (TTVPLLLANLLSWGQAISFSACMA) are Extracellular-facing. Residues cysteine 97 and cysteine 189 are joined by a disulfide bond. A helical membrane pass occupies residues 100 to 120 (QLYFFVFLGATECFLLAFMAY). Topologically, residues 121 to 139 (DRYLAICSPLRYPFLMHRG) are cytoplasmic. A helical transmembrane segment spans residues 140–160 (LCARLVVVSWCTGVSTGFLPS). The Extracellular portion of the chain corresponds to 161 to 197 (LMISRLDFCGRNQINHFFCDLPPLMQLSCSRVYITEV). Residues 198–217 (TIFILSIAVLCICFFLTLGP) form a helical membrane-spanning segment. Topologically, residues 218–237 (YVFIVSSILRIPSTSGRRKT) are cytoplasmic. A helical membrane pass occupies residues 238-258 (FSTCGSHLAVVTLYYGTMISM). At 259-271 (YVCPSPHLLPEIN) the chain is on the extracellular side. A helical transmembrane segment spans residues 272 to 292 (KIISVFYTVVTPLLNPVIYSL). At 293–322 (RNKDFKEAVRKVMRRKCGILWSTSKRKFLY) the chain is on the cytoplasmic side.

This sequence belongs to the G-protein coupled receptor 1 family.

It localises to the cell membrane. In terms of biological role, odorant receptor. This is Olfactory receptor 11L1 (OR11L1) from Homo sapiens (Human).